The chain runs to 337 residues: Eukaryotic translation initiation factor 3 subunit H (337 aa).

Residues 21 to 153 (VQCDGLAVMK…LKAYRLTPQA (133 aa)) form the MPN domain.

It belongs to the eIF-3 subunit H family. In terms of assembly, component of the eukaryotic translation initiation factor 3 (eIF-3) complex. The eIF-3 complex interacts with pix. Interacts with mxt.

The protein localises to the cytoplasm. Component of the eukaryotic translation initiation factor 3 (eIF-3) complex, which is involved in protein synthesis of a specialized repertoire of mRNAs and, together with other initiation factors, stimulates binding of mRNA and methionyl-tRNAi to the 40S ribosome. The eIF-3 complex specifically targets and initiates translation of a subset of mRNAs involved in cell proliferation. In Drosophila grimshawi (Hawaiian fruit fly), this protein is Eukaryotic translation initiation factor 3 subunit H.